We begin with the raw amino-acid sequence, 1002 residues long: Leucine-rich repeat receptor-like serine/threonine-protein kinase BAM2 (1002 aa).

The signal sequence occupies residues 1 to 22 (MKLLLLLLLLLLLHISHSFTVA). Topologically, residues 23–636 (KPITELHALL…SHVKPLSATT (614 aa)) are extracellular. Residues N51, N80, N97, N123, N130, N153, and N164 are each glycosylated (N-linked (GlcNAc...) asparagine). LRR repeat units lie at residues 68–92 (LRHV…VAHL), 93–116 (PLLQ…ISNL), 118–140 (ELRH…LSSG), 141–165 (LVNL…LTNL), 167–188 (QLRH…TYGT), 189–213 (WPVL…IGNL), 215–238 (TLRE…IGNL), 239–262 (SELV…IGKL), 263–285 (QKLD…ELGL), 286–309 (ISSL…SFSQ), 311–334 (KNLT…IGEM), 335–358 (PELE…LGEN), 359–382 (GRLV…MCSG), 384–406 (RLMT…LGKC), 407–430 (ESLT…LFGL), 431–456 (PKLS…GVSG), 458–479 (LGQI…IGNL), 480–503 (SGVQ…IGRL), 505–527 (QLSK…ISRC), 528–551 (KLLT…LTGM), 552–575 (KILN…IASM), and 577–600 (SLTS…QFSY). N-linked (GlcNAc...) asparagine glycosylation is found at N212 and N237. 2 N-linked (GlcNAc...) asparagine glycosylation sites follow: N312 and N346. N420 carries an N-linked (GlcNAc...) asparagine glycan. Residue N478 is glycosylated (N-linked (GlcNAc...) asparagine). N558, N587, and N602 each carry an N-linked (GlcNAc...) asparagine glycan. A helical membrane pass occupies residues 637–657 (KLLLVLGLLFCSMVFAIVAII). At 658–1002 (KARSLRNASE…SGSPPDLLSN (345 aa)) the chain is on the cytoplasmic side. Residue T682 is modified to Phosphothreonine. The 278-residue stretch at 690 to 967 (LKEDNIIGKG…VQILTEIPKI (278 aa)) folds into the Protein kinase domain. Residues 696–704 (IGKGGAGIV) and K718 each bind ATP. Y765 and Y803 each carry phosphotyrosine. The active-site Proton acceptor is D816. S851 is subject to Phosphoserine. Phosphotyrosine is present on residues Y859 and Y866. T867 bears the Phosphothreonine mark. The disordered stretch occupies residues 969-1002 (LSKQQAAESDVTEKAPAINESSPDSGSPPDLLSN). The segment covering 989-1002 (SSPDSGSPPDLLSN) has biased composition (low complexity).

Belongs to the protein kinase superfamily. Ser/Thr protein kinase family. In terms of assembly, interacts with BAM1 and CLV1. Binds to the CLV3, CLE11, CLE18, CLE19, CLE22, CLE25, CLE26, CLE40, CLE41 and CLE42 mature peptides, probably via its extracellular leucine-rich repeat region. In terms of tissue distribution, expressed in seedlings, roots, rosette leaves, stems, inflorescences, flowers and siliques.

It is found in the cell membrane. It catalyses the reaction L-seryl-[protein] + ATP = O-phospho-L-seryl-[protein] + ADP + H(+). The enzyme catalyses L-threonyl-[protein] + ATP = O-phospho-L-threonyl-[protein] + ADP + H(+). Necessary for male gametophyte development, as well as ovule specification and function. Involved in cell-cell communication process required during early anther development, and regulating cell division and differentiation to organize cell layers. Required for the development of high-ordered vascular strands within the leaf and a correlated control of leaf shape, size and symmetry. May regulate the CLV1-dependent CLV3-mediated signaling in meristems maintenance. This Arabidopsis thaliana (Mouse-ear cress) protein is Leucine-rich repeat receptor-like serine/threonine-protein kinase BAM2 (BAM2).